Reading from the N-terminus, the 40-residue chain is Cytolysin EnT (40 aa).

A plays an important role in the hemolytic activity region spans residues 3 to 12 (ALAGTIIEGA). The tract at residues 11–30 (GASLTFSVLTTILDALGSVS) is N-terminal region.

The protein belongs to the actinoporin family. Sea anemone subfamily. In terms of assembly, octamer or nonamer in membranes. Monomer in the soluble state.

The protein localises to the secreted. It is found in the nematocyst. The protein resides in the target cell membrane. In terms of biological role, pore-forming protein that forms cations-selective hydrophilic pores of around 1 nm and causes cytolysis. Pore formation is a multi-step process that involves specific recognition of membrane sphingomyelin (but neither cholesterol nor phosphatidylcholine) using aromatic rich region and adjacent phosphocholine (POC) binding site, firm binding to the membrane (mainly driven by hydrophobic interactions) accompanied by the transfer of the N-terminal region to the lipid-water interface and finally pore formation after oligomerization of monomers. This toxin shows hemolytic activities. This chain is Cytolysin EnT, found in Entacmaea quadricolor (Bubble-tip anemone).